Consider the following 37-residue polypeptide: Large ribosomal subunit protein bL36 (37 aa).

Belongs to the bacterial ribosomal protein bL36 family.

The chain is Large ribosomal subunit protein bL36 from Bacillus pumilus (strain SAFR-032).